Consider the following 285-residue polypeptide: HTH-type transcriptional regulator MurR (285 aa).

The region spanning 1–77 is the HTH rpiR-type domain; that stretch reads MLYLTKISNA…MALIGEYSAS (77 aa). Residues 37–56 constitute a DNA-binding region (H-T-H motif); that stretch reads SRQMAKQLGISQSSIVKFAQ. One can recognise an SIS domain in the interval 128–268; the sequence is IIEVISKAPF…FVGLVQLNDV (141 aa).

Homotetramer.

It functions in the pathway amino-sugar metabolism; N-acetylmuramate degradation [regulation]. In terms of biological role, represses the expression of the murPQ operon involved in the uptake and degradation of N-acetylmuramic acid (MurNAc). Binds to two adjacent inverted repeats within the operator region. MurNAc 6-phosphate, the substrate of MurQ, is the specific inducer that weakens binding of MurR to the operator. This Escherichia coli O139:H28 (strain E24377A / ETEC) protein is HTH-type transcriptional regulator MurR.